Reading from the N-terminus, the 278-residue chain is S-formylglutathione hydrolase YeiG (278 aa).

Active-site charge relay system residues include Ser-145, Asp-223, and His-256.

The protein belongs to the esterase D family.

The enzyme catalyses S-formylglutathione + H2O = formate + glutathione + H(+). Functionally, serine hydrolase involved in the detoxification of formaldehyde. Hydrolyzes S-formylglutathione to glutathione and formate. In Escherichia coli O139:H28 (strain E24377A / ETEC), this protein is S-formylglutathione hydrolase YeiG (yeiG).